The chain runs to 310 residues: tRNA dimethylallyltransferase (310 aa).

An ATP-binding site is contributed by 10 to 17; that stretch reads GPTAVGKS. 12–17 lines the substrate pocket; the sequence is TAVGKS. Residues 35 to 38 form an interaction with substrate tRNA region; it reads DSMQ.

It belongs to the IPP transferase family. In terms of assembly, monomer. Mg(2+) is required as a cofactor.

The catalysed reaction is adenosine(37) in tRNA + dimethylallyl diphosphate = N(6)-dimethylallyladenosine(37) in tRNA + diphosphate. Functionally, catalyzes the transfer of a dimethylallyl group onto the adenine at position 37 in tRNAs that read codons beginning with uridine, leading to the formation of N6-(dimethylallyl)adenosine (i(6)A). In Clostridium perfringens (strain 13 / Type A), this protein is tRNA dimethylallyltransferase.